Here is a 374-residue protein sequence, read N- to C-terminus: MIETNPIRQRITDLNDRVLSLRGIFDYDAKKERLEEVSRELESPDVWNDAERAQALGRERSMLEKTVIGIADVLSGLADAGDLLELAESEQDEDTALAVIADLDNYQAHVEKLEFQRMFSGQMDSANAFVDIQAGAGGTEAQDWAEILLRMYLRWAESRGWKTELMEVSGGEVAGIKSATVRIEGEYAYGWLKTEIGVHRLVRKSPFDSDNRRHTSFTSVFVSPEVDDNIEIDINPADLRTDVYRSSGAGGQHVNKTESAVRITHIPTNTVVACQTGRSQHQNRDNAMKMLAAKLYELEVQKRNAEKDALEATKSDIGWGSQIRNYVLDQSRIKDLRTGIERSDTQKVLDGDLDEFVEASLKAGLAAGSKRLDA.

Gln-252 carries the post-translational modification N5-methylglutamine.

It belongs to the prokaryotic/mitochondrial release factor family. Methylated by PrmC. Methylation increases the termination efficiency of RF2.

It localises to the cytoplasm. In terms of biological role, peptide chain release factor 2 directs the termination of translation in response to the peptide chain termination codons UGA and UAA. The polypeptide is Peptide chain release factor 2 (Xanthomonas euvesicatoria pv. vesicatoria (strain 85-10) (Xanthomonas campestris pv. vesicatoria)).